The sequence spans 274 residues: MTLQEEIIKELGVKPIIDPKEEIRVSVDFLKDYLKKYPFIKSFVLGISGGQDSSLAGRLAQIAIEEMRQETADASYKFVAVRLPFGVQADEEDAQRALAFIKPDVSLAVNIKAAVEGQVAALNEAGVEVSDFNKGNIKARQRMITQYAVAGQYQGAVLGTDHAAENITGFFTKFGDGGADLLPLFRLNKRQGKALLAELGADPAIYEKVPTADLEEGKPGLADEIALGVTYNDIDDYTEGKVISEDAKAKIEAWWNKTQHKRHLPISIFDDFWK.

46–53 (GISGGQDS) is an ATP binding site. Position 52 (D52) interacts with Mg(2+). R140 provides a ligand contact to deamido-NAD(+). T160 lines the ATP pocket. Residue E165 coordinates Mg(2+). Deamido-NAD(+)-binding residues include K173 and D180. The ATP site is built by K189 and T211. Deamido-NAD(+) is bound at residue 260–261 (HK).

Belongs to the NAD synthetase family. In terms of assembly, homodimer.

It carries out the reaction deamido-NAD(+) + NH4(+) + ATP = AMP + diphosphate + NAD(+) + H(+). The protein operates within cofactor biosynthesis; NAD(+) biosynthesis; NAD(+) from deamido-NAD(+) (ammonia route): step 1/1. Catalyzes the ATP-dependent amidation of deamido-NAD to form NAD. Uses ammonia as a nitrogen source. This Lactococcus lactis subsp. cremoris (strain SK11) protein is NH(3)-dependent NAD(+) synthetase.